We begin with the raw amino-acid sequence, 198 residues long: Na(+)-translocating NADH-quinone reductase subunit E (198 aa).

Helical transmembrane passes span 11-31 (SIFIENMALSFFLGMCTFLAV), 39-59 (FGLGVAVVVVLTLAVPLNNLV), 77-97 (FLNFITFIGVIAALVQILEMV), 110-130 (GIFLPLITVNCAIFGGVSFMV), 140-160 (IVYGFGSGVGWMLAIVALAGI), and 176-196 (LGITFITVGLMALGFMSFSGV).

The protein belongs to the NqrDE/RnfAE family. Composed of six subunits; NqrA, NqrB, NqrC, NqrD, NqrE and NqrF.

Its subcellular location is the cell inner membrane. The enzyme catalyses a ubiquinone + n Na(+)(in) + NADH + H(+) = a ubiquinol + n Na(+)(out) + NAD(+). NQR complex catalyzes the reduction of ubiquinone-1 to ubiquinol by two successive reactions, coupled with the transport of Na(+) ions from the cytoplasm to the periplasm. NqrA to NqrE are probably involved in the second step, the conversion of ubisemiquinone to ubiquinol. The polypeptide is Na(+)-translocating NADH-quinone reductase subunit E (Aliivibrio salmonicida (strain LFI1238) (Vibrio salmonicida (strain LFI1238))).